The sequence spans 218 residues: Ornithine decarboxylase antizyme 2 (218 aa).

This sequence belongs to the ODC antizyme family. Interacts with ODC1 and thereby sterically blocks ODC homodimerization. In terms of tissue distribution, expressed ubiquitously in 24 hours embryos, with highest levels in telencephalon, lens, retina, cerebellum and hindbrain primordia.

In terms of biological role, ornithine decarboxylase (ODC) antizyme protein that negatively regulates ODC activity and intracellular polyamine biosynthesis and uptake in response to increased intracellular polyamine levels. Binds to ODC monomers, inhibiting the assembly of the functional ODC homodimers. Does not target the ODC monomers for degradation, which allows a protein synthesis-independent restoration of ODC activity. This is Ornithine decarboxylase antizyme 2 (oaz1b) from Danio rerio (Zebrafish).